The primary structure comprises 402 residues: Type II NADH:quinone oxidoreductase (402 aa).

FAD is bound by residues G12–A16, N39–K40, and V83. The active site involves E172. FAD-binding positions include D302, A319–Q320, and K379.

Belongs to the NADH dehydrogenase family. The cofactor is FAD.

It localises to the cell membrane. It carries out the reaction a quinone + NADH + H(+) = a quinol + NAD(+). In terms of biological role, alternative, nonproton pumping NADH:quinone oxidoreductase that delivers electrons to the respiratory chain by oxidation of NADH and reduction of quinones, and contributes to the regeneration of NAD(+). The protein is Type II NADH:quinone oxidoreductase of Staphylococcus saprophyticus subsp. saprophyticus (strain ATCC 15305 / DSM 20229 / NCIMB 8711 / NCTC 7292 / S-41).